The chain runs to 201 residues: Large ribosomal subunit protein uL4 (201 aa).

The interval 45 to 71 (AQKTRAEVTGSGKKPWRQKGTGRARAG) is disordered.

Belongs to the universal ribosomal protein uL4 family. Part of the 50S ribosomal subunit.

Functionally, one of the primary rRNA binding proteins, this protein initially binds near the 5'-end of the 23S rRNA. It is important during the early stages of 50S assembly. It makes multiple contacts with different domains of the 23S rRNA in the assembled 50S subunit and ribosome. In terms of biological role, forms part of the polypeptide exit tunnel. In Shewanella loihica (strain ATCC BAA-1088 / PV-4), this protein is Large ribosomal subunit protein uL4.